A 318-amino-acid chain; its full sequence is Lipid A biosynthesis acyltransferase (318 aa).

Residues 27 to 47 traverse the membrane as a helical segment; that stretch reads PQYWGIWLGIFFLLLLAFVPF. The HXXXXD motif motif lies at 145-150; it reads HGWAID.

The protein belongs to the LpxL/LpxM/LpxP family. LpxM subfamily.

It localises to the cell inner membrane. It carries out the reaction an alpha-Kdo-(2-&gt;4)-alpha-Kdo-(2-&gt;6)-(acyl)-lipid IVA + a fatty acyl-[ACP] = an alpha-Kdo-(2-&gt;4)-alpha-Kdo-(2-&gt;6)-lipid A + holo-[ACP]. It participates in glycolipid biosynthesis; KDO(2)-lipid A biosynthesis; KDO(2)-lipid A from CMP-3-deoxy-D-manno-octulosonate and lipid IV(A): step 4/4. It functions in the pathway bacterial outer membrane biogenesis; lipopolysaccharide biosynthesis. Functionally, catalyzes the transfer of an acyl chain from an acyl-[acyl-carrier-protein] (ACP) to a Kdo(2)-(acyl)-lipid IV(A) to form a Kdo(2)-lipid A. The sequence is that of Lipid A biosynthesis acyltransferase from Haemophilus influenzae (strain ATCC 51907 / DSM 11121 / KW20 / Rd).